Reading from the N-terminus, the 198-residue chain is FMN-dependent NADH:quinone oxidoreductase 2 (198 aa).

136-139 (SRGG) contacts FMN.

It belongs to the azoreductase type 1 family. Homodimer. Requires FMN as cofactor.

The catalysed reaction is 2 a quinone + NADH + H(+) = 2 a 1,4-benzosemiquinone + NAD(+). It catalyses the reaction N,N-dimethyl-1,4-phenylenediamine + anthranilate + 2 NAD(+) = 2-(4-dimethylaminophenyl)diazenylbenzoate + 2 NADH + 2 H(+). Quinone reductase that provides resistance to thiol-specific stress caused by electrophilic quinones. Functionally, also exhibits azoreductase activity. Catalyzes the reductive cleavage of the azo bond in aromatic azo compounds to the corresponding amines. The chain is FMN-dependent NADH:quinone oxidoreductase 2 from Clostridium perfringens (strain 13 / Type A).